An 807-amino-acid chain; its full sequence is Glycerol-3-phosphate acyltransferase (807 aa).

Residues cysteine 305–methionine 310 carry the HXXXXD motif motif.

Belongs to the GPAT/DAPAT family.

It is found in the cell inner membrane. The catalysed reaction is sn-glycerol 3-phosphate + an acyl-CoA = a 1-acyl-sn-glycero-3-phosphate + CoA. It functions in the pathway phospholipid metabolism; CDP-diacylglycerol biosynthesis; CDP-diacylglycerol from sn-glycerol 3-phosphate: step 1/3. The chain is Glycerol-3-phosphate acyltransferase from Klebsiella pneumoniae subsp. pneumoniae (strain ATCC 700721 / MGH 78578).